The chain runs to 418 residues: Glutamyl-tRNA reductase (418 aa).

Substrate is bound by residues 51–54 (TCNR), serine 107, 112–114 (EPQ), and glutamine 118. Catalysis depends on cysteine 52, which acts as the Nucleophile. 187–192 (GAGETA) is an NADP(+) binding site.

Belongs to the glutamyl-tRNA reductase family. Homodimer.

It catalyses the reaction (S)-4-amino-5-oxopentanoate + tRNA(Glu) + NADP(+) = L-glutamyl-tRNA(Glu) + NADPH + H(+). It functions in the pathway porphyrin-containing compound metabolism; protoporphyrin-IX biosynthesis; 5-aminolevulinate from L-glutamyl-tRNA(Glu): step 1/2. Functionally, catalyzes the NADPH-dependent reduction of glutamyl-tRNA(Glu) to glutamate 1-semialdehyde (GSA). The sequence is that of Glutamyl-tRNA reductase from Dichelobacter nodosus (strain VCS1703A).